Here is a 227-residue protein sequence, read N- to C-terminus: Cysteine-rich hydrophobic domain-containing protein 1 (227 aa).

The interval 1–84 is disordered; sequence MSILLPNMAE…PPRVVSEEHL (84 aa). Acidic residues predominate over residues 13-23; that stretch reads TISELEEEEEA. Over residues 24 to 44 the composition is skewed to low complexity; it reads ATSSSSPSSSPSSSSSSSVSG. Residues 45 to 72 show a composition bias toward acidic residues; it reads PDEDEEDEEEEEEEDEEEEDEEEEEEEV. Residues 46 to 73 are a coiled coil; the sequence is DEDEEDEEEEEEEDEEEEDEEEEEEEVP.

It belongs to the CHIC family. Post-translationally, palmitoylated. As to expression, expressed moderately in the brain.

It localises to the cell membrane. It is found in the cytoplasmic vesicle. The chain is Cysteine-rich hydrophobic domain-containing protein 1 (Chic1) from Mus musculus (Mouse).